We begin with the raw amino-acid sequence, 709 residues long: Polyribonucleotide nucleotidyltransferase (709 aa).

Residues aspartate 486 and aspartate 492 each coordinate Mg(2+). In terms of domain architecture, KH spans 553-612 (PRIHTIKINPDKIKDVIGKGGSVIRALTEETGTTIEIEDDGTVKIAATDGEKAKHAISRI). One can recognise an S1 motif domain in the interval 622–690 (GRIYAGKVTR…RQGRVRLSIK (69 aa)).

The protein belongs to the polyribonucleotide nucleotidyltransferase family. In terms of assembly, component of the RNA degradosome, which is a multiprotein complex involved in RNA processing and mRNA degradation. Requires Mg(2+) as cofactor.

The protein localises to the cytoplasm. The enzyme catalyses RNA(n+1) + phosphate = RNA(n) + a ribonucleoside 5'-diphosphate. Functionally, involved in mRNA degradation. Catalyzes the phosphorolysis of single-stranded polyribonucleotides processively in the 3'- to 5'-direction. In Photorhabdus luminescens (Xenorhabdus luminescens), this protein is Polyribonucleotide nucleotidyltransferase.